Consider the following 103-residue polypeptide: Histone H4 variant TH091 (103 aa).

Residues 1 to 20 (MSGRDKGGKGLGKGGAKRHR) are disordered. Residue S2 is modified to N-acetylserine. An N6-acetyllysine mark is found at K6, K9, K13, K17, and K21. A DNA-binding region spans residues 17–21 (KRHRK).

The protein belongs to the histone H4 family. The nucleosome is a histone octamer containing two molecules each of H2A, H2B, H3 and H4 assembled in one H3-H4 heterotetramer and two H2A-H2B heterodimers. The octamer wraps approximately 147 bp of DNA.

It localises to the nucleus. It is found in the chromosome. Its function is as follows. Core component of nucleosome. Nucleosomes wrap and compact DNA into chromatin, limiting DNA accessibility to the cellular machineries which require DNA as a template. Histones thereby play a central role in transcription regulation, DNA repair, DNA replication and chromosomal stability. DNA accessibility is regulated via a complex set of post-translational modifications of histones, also called histone code, and nucleosome remodeling. In Triticum aestivum (Wheat), this protein is Histone H4 variant TH091.